Consider the following 27-residue polypeptide: uncharacterized protein (27 aa).

This is an uncharacterized protein from Escherichia coli (strain K12).